The chain runs to 510 residues: 2,3-bisphosphoglycerate-independent phosphoglycerate mutase (510 aa).

Mn(2+)-binding residues include Asp13 and Ser63. Ser63 functions as the Phosphoserine intermediate in the catalytic mechanism. Substrate contacts are provided by residues His124, 154 to 155 (RD), Arg186, Arg192, 262 to 265 (RADR), and Lys334. Mn(2+) is bound by residues Asp401, His405, Asp442, His443, and His461.

It belongs to the BPG-independent phosphoglycerate mutase family. Monomer. Mn(2+) is required as a cofactor.

The catalysed reaction is (2R)-2-phosphoglycerate = (2R)-3-phosphoglycerate. It participates in carbohydrate degradation; glycolysis; pyruvate from D-glyceraldehyde 3-phosphate: step 3/5. In terms of biological role, catalyzes the interconversion of 2-phosphoglycerate and 3-phosphoglycerate. The polypeptide is 2,3-bisphosphoglycerate-independent phosphoglycerate mutase (Vibrio atlanticus (strain LGP32) (Vibrio splendidus (strain Mel32))).